Consider the following 562-residue polypeptide: Formate--tetrahydrofolate ligase (562 aa).

Residue 71–78 (TPAGEGKS) participates in ATP binding.

It belongs to the formate--tetrahydrofolate ligase family.

It carries out the reaction (6S)-5,6,7,8-tetrahydrofolate + formate + ATP = (6R)-10-formyltetrahydrofolate + ADP + phosphate. It functions in the pathway one-carbon metabolism; tetrahydrofolate interconversion. In Bacillus anthracis (strain A0248), this protein is Formate--tetrahydrofolate ligase.